The chain runs to 288 residues: Homoserine kinase (288 aa).

An ATP-binding site is contributed by 79–89 (PPARGLGSSSA).

It belongs to the GHMP kinase family. Homoserine kinase subfamily.

The protein resides in the cytoplasm. The enzyme catalyses L-homoserine + ATP = O-phospho-L-homoserine + ADP + H(+). It functions in the pathway amino-acid biosynthesis; L-threonine biosynthesis; L-threonine from L-aspartate: step 4/5. Its function is as follows. Catalyzes the ATP-dependent phosphorylation of L-homoserine to L-homoserine phosphate. In Listeria innocua serovar 6a (strain ATCC BAA-680 / CLIP 11262), this protein is Homoserine kinase.